Here is a 363-residue protein sequence, read N- to C-terminus: Carbamoyl phosphate synthase small chain (363 aa).

The segment at 1-173 is CPSase; sequence MMKAFLVLDN…SKYIFGTHTG (173 aa). The L-glutamine site is built by serine 46, glycine 225, and glycine 227. A Glutamine amidotransferase type-1 domain is found at 177-363; the sequence is KLAVYDYGVK…YDLVEKTKKG (187 aa). The active-site Nucleophile is cysteine 253. L-glutamine is bound by residues leucine 254, glutamine 257, asparagine 295, glycine 297, and phenylalanine 298. Active-site residues include histidine 336 and glutamate 338.

Belongs to the CarA family. Composed of two chains; the small (or glutamine) chain promotes the hydrolysis of glutamine to ammonia, which is used by the large (or ammonia) chain to synthesize carbamoyl phosphate. Tetramer of heterodimers (alpha,beta)4.

The catalysed reaction is hydrogencarbonate + L-glutamine + 2 ATP + H2O = carbamoyl phosphate + L-glutamate + 2 ADP + phosphate + 2 H(+). It catalyses the reaction L-glutamine + H2O = L-glutamate + NH4(+). The protein operates within amino-acid biosynthesis; L-arginine biosynthesis; carbamoyl phosphate from bicarbonate: step 1/1. Its pathway is pyrimidine metabolism; UMP biosynthesis via de novo pathway; (S)-dihydroorotate from bicarbonate: step 1/3. In terms of biological role, small subunit of the glutamine-dependent carbamoyl phosphate synthetase (CPSase). CPSase catalyzes the formation of carbamoyl phosphate from the ammonia moiety of glutamine, carbonate, and phosphate donated by ATP, constituting the first step of 2 biosynthetic pathways, one leading to arginine and/or urea and the other to pyrimidine nucleotides. The small subunit (glutamine amidotransferase) binds and cleaves glutamine to supply the large subunit with the substrate ammonia. This chain is Carbamoyl phosphate synthase small chain, found in Leptospira interrogans serogroup Icterohaemorrhagiae serovar copenhageni (strain Fiocruz L1-130).